A 461-amino-acid polypeptide reads, in one-letter code: Mycosin-3 (461 aa).

The signal sequence occupies residues 1–25; the sequence is MIRAAFACLAATVVVAGWWTPPAWA. Positions 64 to 397 constitute a Peptidase S8 domain; that stretch reads DPGVPTPSQT…AGNLDAVAAL (334 aa). Residues Asp-95, His-126, and Ser-342 each act as charge relay system in the active site. Residues 432–452 traverse the membrane as a helical segment; it reads AFAGAAALSVLVGLTAATVAI.

It belongs to the peptidase S8 family.

It is found in the cell membrane. The protein is Mycosin-3 of Mycobacterium tuberculosis (strain ATCC 25618 / H37Rv).